Here is an 843-residue protein sequence, read N- to C-terminus: Protein P (843 aa).

A terminal protein domain (TP) region spans residues 1 to 177 (MPLSYQHFRK…FCGSPYSWEQ (177 aa)). The spacer stretch occupies residues 178–346 (DLQHGRLVFQ…YCLYHIVNLI (169 aa)). The interval 219–250 (RKSRLGPQPAQGQLAGRQQGGSGSIRARVHPS) is disordered. The segment covering 223–235 (LGPQPAQGQLAGR) has biased composition (low complexity). The polymerase/reverse transcriptase domain (RT) stretch occupies residues 347–690 (EDWGPCTEHG…YLNLYPVARQ (344 aa)). The Reverse transcriptase domain occupies 357–600 (EHRIRTPRTP…YSLNFMGYVI (244 aa)). Mg(2+)-binding residues include Asp429, Asp551, and Asp552.

The protein belongs to the hepadnaviridae P protein family.

The catalysed reaction is DNA(n) + a 2'-deoxyribonucleoside 5'-triphosphate = DNA(n+1) + diphosphate. The enzyme catalyses Endonucleolytic cleavage to 5'-phosphomonoester.. With respect to regulation, activated by host HSP70 and HSP40 in vitro to be able to bind the epsilon loop of the pgRNA. Because deletion of the RNase H region renders the protein partly chaperone-independent, the chaperones may be needed indirectly to relieve occlusion of the RNA-binding site by this domain. Inhibited by several reverse-transcriptase inhibitors: Lamivudine, Adefovir and Entecavir. Functionally, multifunctional enzyme that converts the viral RNA genome into dsDNA in viral cytoplasmic capsids. This enzyme displays a DNA polymerase activity that can copy either DNA or RNA templates, and a ribonuclease H (RNase H) activity that cleaves the RNA strand of RNA-DNA heteroduplexes in a partially processive 3'- to 5'-endonucleasic mode. Neo-synthesized pregenomic RNA (pgRNA) are encapsidated together with the P protein, and reverse-transcribed inside the nucleocapsid. Initiation of reverse-transcription occurs first by binding the epsilon loop on the pgRNA genome, and is initiated by protein priming, thereby the 5'-end of (-)DNA is covalently linked to P protein. Partial (+)DNA is synthesized from the (-)DNA template and generates the relaxed circular DNA (RC-DNA) genome. After budding and infection, the RC-DNA migrates in the nucleus, and is converted into a plasmid-like covalently closed circular DNA (cccDNA). The activity of P protein does not seem to be necessary for cccDNA generation, and is presumably released from (+)DNA by host nuclear DNA repair machinery. This chain is Protein P, found in Hepatitis B virus genotype B2 (isolate Vietnam/16091/1992) (HBV-B).